The sequence spans 484 residues: MEIERKLLRLLHGHNTRTRLPEIHAHLLRHFLHGSNLLLAHFISICGSLSNSDYANRVFSHIQNPNVLVFNAMIKCYSLVGPPLESLSFFSSMKSRGIWADEYTYAPLLKSCSSLSDLRFGKCVHGELIRTGFHRLGKIRIGVVELYTSGGRMGDAQKVFDEMSERNVVVWNLMIRGFCDSGDVERGLHLFKQMSERSIVSWNSMISSLSKCGRDREALELFCEMIDQGFDPDEATVVTVLPISASLGVLDTGKWIHSTAESSGLFKDFITVGNALVDFYCKSGDLEAATAIFRKMQRRNVVSWNTLISGSAVNGKGEFGIDLFDAMIEEGKVAPNEATFLGVLACCSYTGQVERGEELFGLMMERFKLEARTEHYGAMVDLMSRSGRITEAFKFLKNMPVNANAAMWGSLLSACRSHGDVKLAEVAAMELVKIEPGNSGNYVLLSNLYAEEGRWQDVEKVRTLMKKNRLRKSTGQSTICDVSV.

PPR repeat units lie at residues 66–100, 101–135, 136–166, 167–197, 198–232, 233–267, 269–299, 300–334, 336–366, and 372–406; these read NVLV…GIWA, DEYT…GFHR, LGKI…MSER, NVVV…MSER, SIVS…GFDP, DEAT…GLFK, FITV…MQRR, NVVS…GKVA, NEAT…MMER, and RTEH…ANAA. The interval 407–482 is type E motif; sequence MWGSLLSACR…STGQSTICDV (76 aa).

It belongs to the PPR family. PCMP-E subfamily.

This is Pentatricopeptide repeat-containing protein At1g09190 (PCMP-E70) from Arabidopsis thaliana (Mouse-ear cress).